Here is a 1014-residue protein sequence, read N- to C-terminus: Valine--tRNA ligase (1014 aa).

A 'HIGH' region motif is present at residues 49-59; that stretch reads PNVTGSLHMGH. The short motif at 542-546 is the 'KMSKS' region element; sequence KMSKS. Lys545 contributes to the ATP binding site. Positions 947 to 1014 form a coiled coil; the sequence is VVDIETLRAK…ILRLRLQTLV (68 aa).

The protein belongs to the class-I aminoacyl-tRNA synthetase family. ValS type 1 subfamily. Monomer.

The protein resides in the cytoplasm. It carries out the reaction tRNA(Val) + L-valine + ATP = L-valyl-tRNA(Val) + AMP + diphosphate. Catalyzes the attachment of valine to tRNA(Val). As ValRS can inadvertently accommodate and process structurally similar amino acids such as threonine, to avoid such errors, it has a 'posttransfer' editing activity that hydrolyzes mischarged Thr-tRNA(Val) in a tRNA-dependent manner. The sequence is that of Valine--tRNA ligase from Nostoc sp. (strain PCC 7120 / SAG 25.82 / UTEX 2576).